A 352-amino-acid chain; its full sequence is Photosystem II D2 protein (352 aa).

A helical transmembrane segment spans residues 40 to 60; that stretch reads CAYLALGGWLTGTTFVTSWYT. A chlorophyll a-binding site is contributed by histidine 117. A helical membrane pass occupies residues 124-140; that stretch reads GFMLRQFEIAQSVRLRP. 2 residues coordinate pheophytin a: glutamine 129 and asparagine 142. A helical transmembrane segment spans residues 152–165; it reads VFVSVFLIYPLGQS. Histidine 197 contacts chlorophyll a. A helical transmembrane segment spans residues 207-227; it reads AALLCAIHGATVENTLFEDGD. Residues histidine 214 and phenylalanine 261 each contribute to the a plastoquinone site. Residue histidine 214 coordinates Fe cation. Position 268 (histidine 268) interacts with Fe cation. Residues 278–294 traverse the membrane as a helical segment; it reads GLWMSALGVVGLALNLR.

This sequence belongs to the reaction center PufL/M/PsbA/D family. In terms of assembly, PSII is composed of 1 copy each of membrane proteins PsbA, PsbB, PsbC, PsbD, PsbE, PsbF, PsbH, PsbI, PsbJ, PsbK, PsbL, PsbM, PsbT, PsbY, PsbZ, Psb30/Ycf12, at least 3 peripheral proteins of the oxygen-evolving complex and a large number of cofactors. It forms dimeric complexes. The cofactor is The D1/D2 heterodimer binds P680, chlorophylls that are the primary electron donor of PSII, and subsequent electron acceptors. It shares a non-heme iron and each subunit binds pheophytin, quinone, additional chlorophylls, carotenoids and lipids. There is also a Cl(-1) ion associated with D1 and D2, which is required for oxygen evolution. The PSII complex binds additional chlorophylls, carotenoids and specific lipids..

Its subcellular location is the plastid. It localises to the chloroplast thylakoid membrane. The catalysed reaction is 2 a plastoquinone + 4 hnu + 2 H2O = 2 a plastoquinol + O2. Functionally, photosystem II (PSII) is a light-driven water:plastoquinone oxidoreductase that uses light energy to abstract electrons from H(2)O, generating O(2) and a proton gradient subsequently used for ATP formation. It consists of a core antenna complex that captures photons, and an electron transfer chain that converts photonic excitation into a charge separation. The D1/D2 (PsbA/PsbD) reaction center heterodimer binds P680, the primary electron donor of PSII as well as several subsequent electron acceptors. D2 is needed for assembly of a stable PSII complex. The polypeptide is Photosystem II D2 protein (Bigelowiella natans (Pedinomonas minutissima)).